The following is a 364-amino-acid chain: Mannonate dehydratase (364 aa).

The protein belongs to the mannonate dehydratase family. Fe(2+) serves as cofactor. The cofactor is Mn(2+).

It catalyses the reaction D-mannonate = 2-dehydro-3-deoxy-D-gluconate + H2O. The protein operates within carbohydrate metabolism; pentose and glucuronate interconversion. In terms of biological role, catalyzes the dehydration of D-mannonate. This is Mannonate dehydratase from Streptococcus equi subsp. zooepidemicus (strain MGCS10565).